A 95-amino-acid chain; its full sequence is Beta-defensin 132 (95 aa).

Residues 1-22 form the signal peptide; that stretch reads MKFLLLVLAALGFLTQVIPASA. 3 disulfides stabilise this stretch: Cys27-Cys55, Cys35-Cys49, and Cys39-Cys56. The disordered stretch occupies residues 74–95; sequence HWQSRRRNTQRKDKKQQTTVTS. Positions 76–87 are enriched in basic residues; that stretch reads QSRRRNTQRKDK.

Belongs to the beta-defensin family.

The protein resides in the secreted. Functionally, has antibacterial activity. This is Beta-defensin 132 (DEFB132) from Homo sapiens (Human).